A 181-amino-acid chain; its full sequence is Oligoribonuclease (181 aa).

Positions 8–171 constitute an Exonuclease domain; sequence LIWIDLEMTG…DDIRESIAEL (164 aa). Residue Y129 is part of the active site.

This sequence belongs to the oligoribonuclease family.

Its subcellular location is the cytoplasm. In terms of biological role, 3'-to-5' exoribonuclease specific for small oligoribonucleotides. This Alcanivorax borkumensis (strain ATCC 700651 / DSM 11573 / NCIMB 13689 / SK2) protein is Oligoribonuclease.